Reading from the N-terminus, the 252-residue chain is Triosephosphate isomerase (252 aa).

9–11 provides a ligand contact to substrate; it reads NWK. His98 serves as the catalytic Electrophile. The active-site Proton acceptor is the Glu170. Residues Gly176 and Ser215 each coordinate substrate.

Belongs to the triosephosphate isomerase family. As to quaternary structure, homodimer.

It localises to the cytoplasm. It catalyses the reaction D-glyceraldehyde 3-phosphate = dihydroxyacetone phosphate. Its pathway is carbohydrate biosynthesis; gluconeogenesis. It functions in the pathway carbohydrate degradation; glycolysis; D-glyceraldehyde 3-phosphate from glycerone phosphate: step 1/1. Its function is as follows. Involved in the gluconeogenesis. Catalyzes stereospecifically the conversion of dihydroxyacetone phosphate (DHAP) to D-glyceraldehyde-3-phosphate (G3P). The protein is Triosephosphate isomerase of Buchnera aphidicola subsp. Baizongia pistaciae (strain Bp).